Reading from the N-terminus, the 576-residue chain is Sulfite reductase [NADPH] hemoprotein beta-component (576 aa).

[4Fe-4S] cluster contacts are provided by cysteine 435, cysteine 441, cysteine 480, and cysteine 484. Cysteine 484 contributes to the siroheme binding site.

Belongs to the nitrite and sulfite reductase 4Fe-4S domain family. In terms of assembly, alpha(8)-beta(8). The alpha component is a flavoprotein, the beta component is a hemoprotein. Siroheme serves as cofactor. The cofactor is [4Fe-4S] cluster.

The enzyme catalyses hydrogen sulfide + 3 NADP(+) + 3 H2O = sulfite + 3 NADPH + 4 H(+). It participates in sulfur metabolism; hydrogen sulfide biosynthesis; hydrogen sulfide from sulfite (NADPH route): step 1/1. Functionally, component of the sulfite reductase complex that catalyzes the 6-electron reduction of sulfite to sulfide. This is one of several activities required for the biosynthesis of L-cysteine from sulfate. This Yersinia pseudotuberculosis serotype IB (strain PB1/+) protein is Sulfite reductase [NADPH] hemoprotein beta-component.